We begin with the raw amino-acid sequence, 443 residues long: Histidinol dehydrogenase (443 aa).

Residues tyrosine 127, glutamine 185, and asparagine 208 each coordinate NAD(+). Positions 234, 256, and 259 each coordinate substrate. Residues glutamine 256 and histidine 259 each contribute to the Zn(2+) site. Active-site proton acceptor residues include glutamate 323 and histidine 324. 4 residues coordinate substrate: histidine 324, aspartate 357, glutamate 411, and histidine 416. Aspartate 357 provides a ligand contact to Zn(2+). Histidine 416 contacts Zn(2+).

It belongs to the histidinol dehydrogenase family. Zn(2+) is required as a cofactor.

It carries out the reaction L-histidinol + 2 NAD(+) + H2O = L-histidine + 2 NADH + 3 H(+). It functions in the pathway amino-acid biosynthesis; L-histidine biosynthesis; L-histidine from 5-phospho-alpha-D-ribose 1-diphosphate: step 9/9. Its function is as follows. Catalyzes the sequential NAD-dependent oxidations of L-histidinol to L-histidinaldehyde and then to L-histidine. This chain is Histidinol dehydrogenase, found in Photobacterium profundum (strain SS9).